Consider the following 633-residue polypeptide: ABC transporter G family member 1 (633 aa).

The 243-residue stretch at 23 to 265 (LTWEDLWVTA…FALSGFPCPT (243 aa)) folds into the ABC transporter domain. Residue 60–67 (GPSGSGKS) coordinates ATP. Positions 340-552 (TQSLVLTRRS…AYEGMFKNEF (213 aa)) constitute an ABC transmembrane type-2 domain. N-linked (GlcNAc...) asparagine glycosylation is present at Asn-352. 6 helical membrane-spanning segments follow: residues 364 to 384 (LAVY…VGFS), 394 to 414 (MLMF…PSFV), 440 to 460 (LSAM…AYFM), 470 to 490 (FIYF…LMMI), 498 to 518 (FLMG…SGGF), and 580 to 600 (IDLV…LLVV).

This sequence belongs to the ABC transporter superfamily. ABCG family. As to quaternary structure, homodimer. In terms of tissue distribution, restricted to the petals, with the highest expression in the limb and, to a lesser extent, in petal tubes, probably in both epidermal and mesophyll cell layers.

It is found in the cell membrane. ABC transporter controlling the release of volatile organic compounds (VOCs), including floral volatile benzenoids and phenylpropanoids (FVBP), in flowers of fragrant cultivars (e.g. cv. Mitchell and cv. V26). This scent, mostly produced in the evening and night by the petals, attracts the pollinators (e.g. the night-active hawkmoth pollinator Manduca sexta). The polypeptide is ABC transporter G family member 1 (Petunia hybrida (Petunia)).